A 148-amino-acid polypeptide reads, in one-letter code: SsrA-binding protein (148 aa).

The segment covering 127 to 142 (KRESEKERDWERDKAR) has biased composition (basic and acidic residues). Residues 127–148 (KRESEKERDWERDKARLMRVKT) are disordered.

Belongs to the SmpB family.

Its subcellular location is the cytoplasm. Functionally, required for rescue of stalled ribosomes mediated by trans-translation. Binds to transfer-messenger RNA (tmRNA), required for stable association of tmRNA with ribosomes. tmRNA and SmpB together mimic tRNA shape, replacing the anticodon stem-loop with SmpB. tmRNA is encoded by the ssrA gene; the 2 termini fold to resemble tRNA(Ala) and it encodes a 'tag peptide', a short internal open reading frame. During trans-translation Ala-aminoacylated tmRNA acts like a tRNA, entering the A-site of stalled ribosomes, displacing the stalled mRNA. The ribosome then switches to translate the ORF on the tmRNA; the nascent peptide is terminated with the 'tag peptide' encoded by the tmRNA and targeted for degradation. The ribosome is freed to recommence translation, which seems to be the essential function of trans-translation. This is SsrA-binding protein from Aromatoleum aromaticum (strain DSM 19018 / LMG 30748 / EbN1) (Azoarcus sp. (strain EbN1)).